Reading from the N-terminus, the 240-residue chain is MEGLINGSVYYKIFDKTFNNSSHRYIKKNNSINETEIVENKKSITTYFKAQDILILNQVHGNQIVNADESIIAVPEADGSITTKKNLILAVQSADCVPVLLASGDGKIIGAAHAGWKGSINNIISNIVTKITEKGAKNLIAVIGPAIAQSSYEVDDEYYKAFLSKDINNKQFFIHSIKENHYMFDLPAFVELKLKEAGVKDIKNIAEDTYTNPLKYPSKRRSYHLQEPYNQNILSAIVMK.

His60, Cys96, and His113 together coordinate Zn(2+).

Belongs to the purine nucleoside phosphorylase YfiH/LACC1 family. As to quaternary structure, homodimer. The cofactor is Cu(2+). Requires Zn(2+) as cofactor.

It catalyses the reaction adenosine + phosphate = alpha-D-ribose 1-phosphate + adenine. The catalysed reaction is S-methyl-5'-thioadenosine + phosphate = 5-(methylsulfanyl)-alpha-D-ribose 1-phosphate + adenine. The enzyme catalyses inosine + phosphate = alpha-D-ribose 1-phosphate + hypoxanthine. It carries out the reaction adenosine + H2O + H(+) = inosine + NH4(+). Purine nucleoside enzyme that catalyzes the phosphorolysis of adenosine and inosine nucleosides, yielding D-ribose 1-phosphate and the respective free bases, adenine and hypoxanthine. Also catalyzes the phosphorolysis of S-methyl-5'-thioadenosine into adenine and S-methyl-5-thio-alpha-D-ribose 1-phosphate. Also has adenosine deaminase activity. This Rickettsia conorii (strain ATCC VR-613 / Malish 7) protein is Purine nucleoside phosphorylase RC0672.